The chain runs to 249 residues: tRNA (guanine-N(1)-)-methyltransferase (249 aa).

Residues glycine 121 and leucine 141 to leucine 146 contribute to the S-adenosyl-L-methionine site.

Belongs to the RNA methyltransferase TrmD family. As to quaternary structure, homodimer.

It localises to the cytoplasm. It catalyses the reaction guanosine(37) in tRNA + S-adenosyl-L-methionine = N(1)-methylguanosine(37) in tRNA + S-adenosyl-L-homocysteine + H(+). Its function is as follows. Specifically methylates guanosine-37 in various tRNAs. The sequence is that of tRNA (guanine-N(1)-)-methyltransferase from Cereibacter sphaeroides (strain ATCC 17023 / DSM 158 / JCM 6121 / CCUG 31486 / LMG 2827 / NBRC 12203 / NCIMB 8253 / ATH 2.4.1.) (Rhodobacter sphaeroides).